A 220-amino-acid polypeptide reads, in one-letter code: Adenylate kinase (220 aa).

10-15 (GSGKST) lines the ATP pocket. The interval 30–59 (SSGDIIRAEISSRTPLGLEMEKYLSRGDLI) is NMP. AMP-binding positions include serine 31, arginine 36, 57–59 (DLI), 83–86 (GYPR), and glutamine 90. The segment at 124–161 (GRRICSKCGAVYHIEFNPPKIPGKCDICGGDLIQRPDD) is LID. ATP is bound at residue arginine 125. Zn(2+)-binding residues include cysteine 128 and cysteine 131. ATP is bound at residue 134 to 135 (VY). 2 residues coordinate Zn(2+): cysteine 148 and cysteine 151. AMP is bound by residues arginine 158 and arginine 169. Residue glycine 197 participates in ATP binding.

It belongs to the adenylate kinase family. As to quaternary structure, monomer.

It is found in the cytoplasm. It catalyses the reaction AMP + ATP = 2 ADP. It participates in purine metabolism; AMP biosynthesis via salvage pathway; AMP from ADP: step 1/1. In terms of biological role, catalyzes the reversible transfer of the terminal phosphate group between ATP and AMP. Plays an important role in cellular energy homeostasis and in adenine nucleotide metabolism. The chain is Adenylate kinase from Pyrococcus horikoshii (strain ATCC 700860 / DSM 12428 / JCM 9974 / NBRC 100139 / OT-3).